Consider the following 326-residue polypeptide: Fos-related antigen 2 (326 aa).

Residue Met-1 is modified to N-acetylmethionine. The interval 1–39 is disordered; that stretch reads MYQDYPGNFDTSSRGSSGSPAHAESYSSGGGGQQKFRVD. A compositionally biased stretch (polar residues) spans 9 to 19; sequence FDTSSRGSSGS. Lys-35 participates in a covalent cross-link: Glycyl lysine isopeptide (Lys-Gly) (interchain with G-Cter in SUMO2). Lys-104 carries the N6-acetyllysine; alternate modification. Lys-104 participates in a covalent cross-link: Glycyl lysine isopeptide (Lys-Gly) (interchain with G-Cter in SUMO2); alternate. 3 disordered regions span residues 111-131, 193-244, and 289-326; these read GRRRRDEQLSPEEEEKRRIRR, ISPE…QRSV, and EQESPASPSESCSKAHRRSSSSGDQSSDSLNSPTLLAL. Ser-120 carries the phosphoserine modification. One can recognise a bZIP domain in the interval 124 to 187; the sequence is EEKRRIRRER…EKLEFMLVAH (64 aa). A basic motif region spans residues 126–128; sequence KRR. The segment at 129-136 is leucine-zipper; sequence IRRERNKL. Ser-200 carries the phosphoserine modification. Polar residues predominate over residues 201-211; that stretch reads PPTSGLQSLRG. Lys-222 is covalently cross-linked (Glycyl lysine isopeptide (Lys-Gly) (interchain with G-Cter in SUMO2); alternate). Residue Lys-222 forms a Glycyl lysine isopeptide (Lys-Gly) (interchain with G-Cter in SUMO1); alternate linkage. Ser-230 carries the phosphoserine modification. Residue Lys-239 forms a Glycyl lysine isopeptide (Lys-Gly) (interchain with G-Cter in SUMO2) linkage. Ser-308 and Ser-320 each carry phosphoserine. A compositionally biased stretch (low complexity) spans 308–320; sequence SSSGDQSSDSLNS.

The protein belongs to the bZIP family. Fos subfamily. As to quaternary structure, heterodimer. Interacts with the BAF multiprotein chromatin-remodeling complex subunits SMARCB1 and SMARCD1. Interacts with ARID1A and JUN. Expressed in the brain cortex. Expressed at night in pineal gland (at protein level). Also expressed in osteoblasts (at protein level).

Its subcellular location is the nucleus. Its function is as follows. Controls osteoclast survival and size. As a dimer with JUN, activates LIF transcription. Activates CEBPB transcription in PGE2-activated osteoblasts. This is Fos-related antigen 2 (Fosl2) from Rattus norvegicus (Rat).